Reading from the N-terminus, the 445-residue chain is Argininosuccinate synthase (445 aa).

Residues 17–25 (AFSGGLDTS) and alanine 43 contribute to the ATP site. An L-citrulline-binding site is contributed by tyrosine 99. Residues glycine 129 and threonine 131 each coordinate ATP. The L-aspartate site is built by threonine 131, asparagine 135, and aspartate 136. Position 135 (asparagine 135) interacts with L-citrulline. Aspartate 136 is a binding site for ATP. Positions 139 and 192 each coordinate L-citrulline. ATP is bound at residue aspartate 194. L-citrulline is bound by residues threonine 201, glutamate 203, and glutamate 280.

The protein belongs to the argininosuccinate synthase family. Type 2 subfamily. Homotetramer.

The protein resides in the cytoplasm. The catalysed reaction is L-citrulline + L-aspartate + ATP = 2-(N(omega)-L-arginino)succinate + AMP + diphosphate + H(+). It functions in the pathway amino-acid biosynthesis; L-arginine biosynthesis; L-arginine from L-ornithine and carbamoyl phosphate: step 2/3. This is Argininosuccinate synthase from Rhodopseudomonas palustris (strain BisB18).